An 849-amino-acid chain; its full sequence is Glycogen phosphorylase (849 aa).

Lys679 carries the N6-(pyridoxal phosphate)lysine modification.

The protein belongs to the glycogen phosphorylase family. Pyridoxal 5'-phosphate is required as a cofactor.

It carries out the reaction [(1-&gt;4)-alpha-D-glucosyl](n) + phosphate = [(1-&gt;4)-alpha-D-glucosyl](n-1) + alpha-D-glucose 1-phosphate. In terms of biological role, phosphorylase is an important allosteric enzyme in carbohydrate metabolism. Enzymes from different sources differ in their regulatory mechanisms and in their natural substrates. However, all known phosphorylases share catalytic and structural properties. This chain is Glycogen phosphorylase (glgP), found in Synechocystis sp. (strain ATCC 27184 / PCC 6803 / Kazusa).